A 379-amino-acid chain; its full sequence is Cell division protein FtsZ (379 aa).

GTP is bound by residues 18 to 22 (GGGVN), 105 to 107 (GTG), glutamate 136, arginine 140, and aspartate 184.

It belongs to the FtsZ family. In terms of assembly, homodimer. Polymerizes to form a dynamic ring structure in a strictly GTP-dependent manner. Interacts directly with several other division proteins.

The protein resides in the cytoplasm. Essential cell division protein that forms a contractile ring structure (Z ring) at the future cell division site. The regulation of the ring assembly controls the timing and the location of cell division. One of the functions of the FtsZ ring is to recruit other cell division proteins to the septum to produce a new cell wall between the dividing cells. Binds GTP and shows GTPase activity. The chain is Cell division protein FtsZ from Mycobacterium bovis (strain ATCC BAA-935 / AF2122/97).